The sequence spans 267 residues: Tetrahydromethanopterin S-methyltransferase subunit C (267 aa).

A run of 8 helical transmembrane segments spans residues 18–38 (LMALGILGGLAGIYASAVNPV), 39–59 (IGPVLASLGAVCAIVWGADAI), 76–96 (YMSVSIGIVGVVAGLASVFVV), 99–119 (IAVPVVALILAMILGVVVAVL), 138–158 (ISGAAALSVLGFSAAIAGSYT), 163–183 (LTSVITTGFIGLLFILNTMAI), 209–229 (FISMAIVGLLGIGLNPSWWLV), and 230–250 (SLIGALCWIVAFRAFVSASFE).

Belongs to the MtrC family. The complex is composed of 8 subunits; MtrA, MtrB, MtrC, MtrD, MtrE, MtrF, MtrG and MtrH.

Its subcellular location is the cell membrane. It catalyses the reaction 5-methyl-5,6,7,8-tetrahydromethanopterin + coenzyme M + 2 Na(+)(in) = 5,6,7,8-tetrahydromethanopterin + methyl-coenzyme M + 2 Na(+)(out). Its pathway is one-carbon metabolism; methanogenesis from CO(2); methyl-coenzyme M from 5,10-methylene-5,6,7,8-tetrahydromethanopterin: step 2/2. Its function is as follows. Part of a complex that catalyzes the formation of methyl-coenzyme M and tetrahydromethanopterin from coenzyme M and methyl-tetrahydromethanopterin. This is an energy-conserving, sodium-ion translocating step. The chain is Tetrahydromethanopterin S-methyltransferase subunit C from Methanothermobacter marburgensis (strain ATCC BAA-927 / DSM 2133 / JCM 14651 / NBRC 100331 / OCM 82 / Marburg) (Methanobacterium thermoautotrophicum).